We begin with the raw amino-acid sequence, 404 residues long: Serine/threonine transporter SstT (404 aa).

The next 8 membrane-spanning stretches (helical) occupy residues 17–37 (IGIGVVIGVMLGILAPDLTGF), 39–59 (ILGKLFVGGLKAIAPLLVFAL), 75–95 (MTLIIFLYLFGTFASALVAVL), 138–158 (ALATANYIGVLSWAIIFGLAL), 179–199 (IVVWIINLAPIGIMSLVFTTI), 212–232 (FLILVLVGTMVFVALVVNPLI), 287–307 (IPLGATINMGGAAITINVLTL), and 313–333 (FGIPIDFLTALLLSVVAAVSA).

This sequence belongs to the dicarboxylate/amino acid:cation symporter (DAACS) (TC 2.A.23) family.

Its subcellular location is the cell membrane. It carries out the reaction L-serine(in) + Na(+)(in) = L-serine(out) + Na(+)(out). The enzyme catalyses L-threonine(in) + Na(+)(in) = L-threonine(out) + Na(+)(out). In terms of biological role, involved in the import of serine and threonine into the cell, with the concomitant import of sodium (symport system). This Streptococcus pyogenes serotype M5 (strain Manfredo) protein is Serine/threonine transporter SstT.